The chain runs to 215 residues: Sodium channel regulatory subunit beta-3 (215 aa).

The N-terminal stretch at 1 to 22 (MPAFNRLFPLASLLLILWVGVC) is a signal peptide. The Extracellular segment spans residues 23–156 (FPVCVEVPSE…EEAGEDFTSV (134 aa)). 2 disulfides stabilise this stretch: Cys-26–Cys-48 and Cys-45–Cys-120. The 123-residue stretch at 32 to 154 (ETEAVQGNPM…VTEEAGEDFT (123 aa)) folds into the Ig-like C2-type domain. Asn-95, Asn-109, Asn-113, and Asn-121 each carry an N-linked (GlcNAc...) asparagine glycan. Residues 157-178 (VSEIMMYILLVFLTLWLLIEMI) traverse the membrane as a helical segment. Over 179 to 215 (YCYRKVSKAEEAAQENASDYLAIPSENKENSAVPVEE) the chain is Cytoplasmic.

Belongs to the sodium channel auxiliary subunit SCN3B (TC 8.A.17) family. In terms of assembly, a voltage-gated sodium (Nav) channel consists of an ion-conducting pore-forming alpha subunit functional on its own that is regulated by one or more beta subunits. Forms homodimers and homotrimers. SCN3B is non-covalently associated with alpha subunits and induces the formation of alpha subunit oligomers, including trimers. Interacts with SCN5A/Nav1.5; regulatory subunit of SCN5A/Nav1.5. Interacts with SCN7A/Nav2.1; probable regulatory subunit of SCN7A/Nav2.1. Interacts with SCN10A; regulatory subunit of SCN10A/Nav1.8. Interacts with NFASC; probably involved in targeting the sodium channels to the nodes of Ranvier. In terms of processing, intramolecular disulfide bonds favor the voltage-gated sodium channel oligomeric complex assembly. N-glycosylated.

It localises to the cell membrane. Regulatory subunit of multiple voltage-gated sodium (Nav) channels directly mediating the depolarization of excitable membranes. Navs, also called VGSCs (voltage-gated sodium channels) or VDSCs (voltage-dependent sodium channels), operate by switching between closed and open conformations depending on the voltage difference across the membrane. In the open conformation they allow Na(+) ions to selectively pass through the pore, along their electrochemical gradient. The influx of Na+ ions provokes membrane depolarization, initiating the propagation of electrical signals throughout cells and tissues. The accessory beta subunits participate in localization and functional modulation of the Nav channels. Modulates the activity of SCN2A/Nav1.2, causing a hyperpolarizing shift in the voltage-dependence of inactivation of the channel and increasing the fraction of channels operating in the fast gating mode. Modulates the activity of SCN5A/Nav1.5. Could also regulate the atypical sodium channel SCN7A/Nav2.1. Modulates the activity of SCN10A/Nav1.8, regulating its oligomerization and accelerating the recovery from inactivation. In Bos taurus (Bovine), this protein is Sodium channel regulatory subunit beta-3.